Reading from the N-terminus, the 186-residue chain is Elongation factor P (186 aa).

This sequence belongs to the elongation factor P family.

The protein resides in the cytoplasm. It participates in protein biosynthesis; polypeptide chain elongation. In terms of biological role, involved in peptide bond synthesis. Stimulates efficient translation and peptide-bond synthesis on native or reconstituted 70S ribosomes in vitro. Probably functions indirectly by altering the affinity of the ribosome for aminoacyl-tRNA, thus increasing their reactivity as acceptors for peptidyl transferase. This chain is Elongation factor P, found in Beutenbergia cavernae (strain ATCC BAA-8 / DSM 12333 / CCUG 43141 / JCM 11478 / NBRC 16432 / NCIMB 13614 / HKI 0122).